The following is a 679-amino-acid chain: Transketolase (679 aa).

H30 serves as a coordination point for substrate. Thiamine diphosphate contacts are provided by residues H69 and 116–118 (GPL). D157 provides a ligand contact to Mg(2+). Thiamine diphosphate is bound by residues G158 and N187. Mg(2+) is bound by residues N187 and I189. 3 residues coordinate substrate: H262, R358, and S385. H262 is a binding site for thiamine diphosphate. Residues E417 and F444 each coordinate thiamine diphosphate. The active-site Proton donor is the E417. Substrate-binding residues include H468, D476, and R527.

This sequence belongs to the transketolase family. As to quaternary structure, homodimer. Requires Mg(2+) as cofactor. The cofactor is Ca(2+). Mn(2+) is required as a cofactor. Co(2+) serves as cofactor. It depends on thiamine diphosphate as a cofactor.

It carries out the reaction D-sedoheptulose 7-phosphate + D-glyceraldehyde 3-phosphate = aldehydo-D-ribose 5-phosphate + D-xylulose 5-phosphate. Functionally, catalyzes the transfer of a two-carbon ketol group from a ketose donor to an aldose acceptor, via a covalent intermediate with the cofactor thiamine pyrophosphate. The polypeptide is Transketolase (TKL1) (Kluyveromyces lactis (strain ATCC 8585 / CBS 2359 / DSM 70799 / NBRC 1267 / NRRL Y-1140 / WM37) (Yeast)).